Here is a 411-residue protein sequence, read N- to C-terminus: Squalene synthase (411 aa).

A run of 2 helical transmembrane segments spans residues 281–301 (SIFRFCAIPQVMAIGTLAMCY) and 388–408 (SPVLIVVIFIILAIILAQLSG).

This sequence belongs to the phytoene/squalene synthase family. Requires Mg(2+) as cofactor.

It is found in the endoplasmic reticulum membrane. It carries out the reaction 2 (2E,6E)-farnesyl diphosphate + NADPH + H(+) = squalene + 2 diphosphate + NADP(+). It catalyses the reaction 2 (2E,6E)-farnesyl diphosphate + NADH + H(+) = squalene + 2 diphosphate + NAD(+). The protein operates within terpene metabolism; lanosterol biosynthesis; lanosterol from farnesyl diphosphate: step 1/3. This chain is Squalene synthase, found in Nicotiana benthamiana.